The sequence spans 314 residues: Olfactory receptor 5D13 (314 aa).

The Extracellular segment spans residues 1–27 (MMASERNQSSTPTFILLGFSEYPEIQV). Asparagine 7 carries an N-linked (GlcNAc...) asparagine glycan. The helical transmembrane segment at 28–48 (PLFLVFLFVYTVTVVGNLGMI) threads the bilayer. The Cytoplasmic segment spans residues 49-56 (IIIRLNSK). A helical membrane pass occupies residues 57-77 (LHTIMCFFLSHLSLTDFCFST). At 78–101 (VVTPKLLENLVVEYRTISFSGCIM) the chain is on the extracellular side. Residues 102 to 122 (QFCFACIFGVTETFMLAAMAY) form a helical membrane-spanning segment. Residues 123 to 141 (DRFVAVCKPLLYTTIMSQK) lie on the Cytoplasmic side of the membrane. Residues 142–162 (LCALLVAGSYTWGIVCSLILT) form a helical membrane-spanning segment. Over 163-198 (YFLLDLSFCESTFINNFICDHSVIVSASYSDPYISQ) the chain is Extracellular. The chain crosses the membrane as a helical span at residues 199–219 (RLCFIIAIFNEVSSLIIILTS). The Cytoplasmic portion of the chain corresponds to 220-239 (YMLIFTTIMKMRSASGRQKT). A helical membrane pass occupies residues 240–260 (FSTCASHLTAITIFHGTILFL). The Extracellular portion of the chain corresponds to 261–273 (YCVPNPKTSSLIV). The helical transmembrane segment at 274–294 (TVASVFYTVAIPMLNPLIYSL) threads the bilayer. Residues 295 to 314 (RNKDINNMFEKLVVTKLIYH) are Cytoplasmic-facing.

Belongs to the G-protein coupled receptor 1 family.

It localises to the cell membrane. In terms of biological role, odorant receptor. The sequence is that of Olfactory receptor 5D13 (OR5D13) from Homo sapiens (Human).